The following is a 392-amino-acid chain: Cellobiose 2-epimerase (392 aa).

The protein belongs to the cellobiose 2-epimerase family.

The catalysed reaction is D-cellobiose = beta-D-glucosyl-(1-&gt;4)-D-mannopyranose. Functionally, catalyzes the reversible epimerization of cellobiose to 4-O-beta-D-glucopyranosyl-D-mannose (Glc-Man). Can also epimerize cellotriose to Glc-Glc-Man, cellotetraose to Glc-Glc-Glc-Man, lactose to epilactose, and mannobiose to 4-O-beta-D-mannopyranosyl-D-glucopyranose (Man-Glc). May function as a mannobiose 2-epimerase in vivo and be involved in a mannan catabolic pathway which feeds into glycolysis. The sequence is that of Cellobiose 2-epimerase (bfce) from Bacteroides fragilis (strain ATCC 25285 / DSM 2151 / CCUG 4856 / JCM 11019 / LMG 10263 / NCTC 9343 / Onslow / VPI 2553 / EN-2).